Reading from the N-terminus, the 293-residue chain is Ribosomal protein L11 methyltransferase (293 aa).

Threonine 145, glycine 166, aspartate 188, and asparagine 230 together coordinate S-adenosyl-L-methionine.

This sequence belongs to the methyltransferase superfamily. PrmA family.

Its subcellular location is the cytoplasm. The enzyme catalyses L-lysyl-[protein] + 3 S-adenosyl-L-methionine = N(6),N(6),N(6)-trimethyl-L-lysyl-[protein] + 3 S-adenosyl-L-homocysteine + 3 H(+). Its function is as follows. Methylates ribosomal protein L11. The sequence is that of Ribosomal protein L11 methyltransferase from Shewanella baltica (strain OS223).